We begin with the raw amino-acid sequence, 111 residues long: Secreted RxLR effector protein 81 (111 aa).

A signal peptide spans 1-16; it reads MLVSMLLIIFPNGVSL. Asn-52 carries an N-linked (GlcNAc...) asparagine glycan. A disordered region spans residues 73 to 92; it reads KKFSSSDEDKSRDVRRRLRP. A RxLR-dEER motif is present at residues 88–91; it reads RRLR.

The protein belongs to the RxLR effector family.

The protein localises to the secreted. It is found in the host nucleus. The protein resides in the host cytoplasm. Secreted effector that partially suppresses the host cell death induced by cell death-inducing proteins. This is Secreted RxLR effector protein 81 from Plasmopara viticola (Downy mildew of grapevine).